The chain runs to 217 residues: Peroxiredoxin (217 aa).

One can recognise a Thioredoxin domain in the interval Pro2–Val159. The Cysteine sulfenic acid (-SOH) intermediate role is filled by Cys46. Residue Arg122 participates in substrate binding. An intrachain disulfide couples Cys206 to Cys212.

The protein belongs to the peroxiredoxin family. Prx6 subfamily. In terms of assembly, homodecamer. Pentamer of dimers that assemble into a ring structure.

It is found in the cytoplasm. It carries out the reaction a hydroperoxide + [thioredoxin]-dithiol = an alcohol + [thioredoxin]-disulfide + H2O. Thiol-specific peroxidase that catalyzes the reduction of hydrogen peroxide and organic hydroperoxides to water and alcohols, respectively. Plays a role in cell protection against oxidative stress by detoxifying peroxides. In Methanocaldococcus jannaschii (strain ATCC 43067 / DSM 2661 / JAL-1 / JCM 10045 / NBRC 100440) (Methanococcus jannaschii), this protein is Peroxiredoxin.